The chain runs to 747 residues: Zinc finger and BTB domain-containing protein 47 (747 aa).

Positions 15–83 (CDVDLVLVPQ…IYTSKLLVNA (69 aa)) constitute a BTB domain. Lys190 participates in a covalent cross-link: Glycyl lysine isopeptide (Lys-Gly) (interchain with G-Cter in SUMO2). Residues 243–424 (QTLHVSTGPE…ARGPPATDGL (182 aa)) are disordered. The segment covering 267–277 (GREDGLQRHSD) has biased composition (basic and acidic residues). Over residues 278-354 (EEEEDDEEEE…SEEEEGEEGE (77 aa)) the composition is skewed to acidic residues. The segment covering 380–398 (RSRENARRRGTPEPEEAGR) has biased composition (basic and acidic residues). Residues 436-459 (HPCQKCPRVFNNRWYLEKHMNVTH) form a C2H2-type 1 zinc finger. The C2H2-type 2; degenerate zinc-finger motif lies at 463–485 (QICDQCGKRFLLESELLLHRQTD). 7 C2H2-type zinc fingers span residues 490 to 513 (IQCV…KIVH), 520 to 542 (FSCE…MVAH), 548 to 570 (FTCE…SLQH), 576 to 598 (FRCE…MSIH), 604 to 626 (FMCQ…MKTH), 632 to 654 (YICE…RRTH), and 660 to 687 (YPCD…RVSH). The interval 694–747 (VPAAPGLPPTQPQAHALPLLPGLPQTLPPPPHLPPPPPLFPTTASPGGRMNANN) is disordered. Positions 719–733 (TLPPPPHLPPPPPLF) are enriched in pro residues.

It belongs to the krueppel C2H2-type zinc-finger protein family.

It localises to the nucleus. May be involved in transcriptional regulation. The sequence is that of Zinc finger and BTB domain-containing protein 47 (ZBTB47) from Homo sapiens (Human).